Here is a 63-residue protein sequence, read N- to C-terminus: Large ribosomal subunit protein uL29 (63 aa).

It belongs to the universal ribosomal protein uL29 family.

This Actinobacillus succinogenes (strain ATCC 55618 / DSM 22257 / CCUG 43843 / 130Z) protein is Large ribosomal subunit protein uL29.